The chain runs to 186 residues: Elongation factor P (186 aa).

Belongs to the elongation factor P family.

It is found in the cytoplasm. Its pathway is protein biosynthesis; polypeptide chain elongation. Its function is as follows. Involved in peptide bond synthesis. Stimulates efficient translation and peptide-bond synthesis on native or reconstituted 70S ribosomes in vitro. Probably functions indirectly by altering the affinity of the ribosome for aminoacyl-tRNA, thus increasing their reactivity as acceptors for peptidyl transferase. The polypeptide is Elongation factor P (Prochlorococcus marinus (strain MIT 9215)).